The following is a 647-amino-acid chain: MAKIIGIDLGTTNSCVAVLEGDKVKVIENAEGTRTTPSIVAYKDSEILVGQSAKRQAVTNPKNTLFAIKRLIGRRYEDQAVQKDIGLVPYKIIKADNGDAWVEVNDKKLAPQQVSAEILKKMKKTAEDYLGETVTEAVITVPAYFNDAQRQATKDAGRIAGLDVKRIINEPTAAALAFGMDKKEGDRKVAVYDLGGGTFDVSIIEIADLDGDQQIEVLSTNGDTFLGGEDFDTALIDYLVEEFKKEQSVNLKNDPLALQRLKEAAEKAKIELSSSSSTEINLPYITADATGPKHLVINVTRAKLEGLVADLVARTIEPCRIALKDAGLSTSDISDVILVGGQSRMPMVQQKVQEFFGKEPRKDVNPDEAVAIGAAIQGAVLSGDKTDVLLLDVTPLTLGIETMGGVLTPIIEKNTTIPAKKSQVFSTAADNQPAVDISVYQGERKMAQQNKLLGNFQLGDIPPAPRGVPQIEVSFDINADGILKVSAKDKSTGKEQSIQIKANSGLSDAEIEAMIKDAEANAEEDRKFEELAKARNEADALVSSSNKAVKDLGDKVTEDEKTAITTAVSELEAATKENDVEDIKAKTEALQNILMPITQRAYEQAQGAGGAQGFDPNAFQGGDAGQQQKADDGVVDAEFTEVKDDKK.

Position 198 is a phosphothreonine; by autocatalysis (threonine 198). A disordered region spans residues 603-647; it reads EQAQGAGGAQGFDPNAFQGGDAGQQQKADDGVVDAEFTEVKDDKK. A compositionally biased stretch (low complexity) spans 618–628; that stretch reads AFQGGDAGQQQ.

Belongs to the heat shock protein 70 family.

Functionally, acts as a chaperone. The chain is Chaperone protein DnaK from Acinetobacter baylyi (strain ATCC 33305 / BD413 / ADP1).